Here is a 153-residue protein sequence, read N- to C-terminus: Deoxyuridine 5'-triphosphate nucleotidohydrolase (153 aa).

Positions 75, 88, 91, 94, 99, 143, 148, and 149 each coordinate dUMP.

The protein belongs to the dUTPase family. In terms of assembly, homotrimer. The cofactor is Mg(2+).

It carries out the reaction dUTP + H2O = dUMP + diphosphate + H(+). The protein operates within pyrimidine metabolism; dUMP biosynthesis; dUMP from dCTP (dUTP route): step 2/2. Its function is as follows. Involved in nucleotide metabolism via production of dUMP, the immediate precursor of thymidine nucleotides, and decreases the intracellular concentration of dUTP so that uracil cannot be incorporated into DNA. The protein is Deoxyuridine 5'-triphosphate nucleotidohydrolase (DUT1) of Eremothecium gossypii (strain ATCC 10895 / CBS 109.51 / FGSC 9923 / NRRL Y-1056) (Yeast).